The chain runs to 37 residues: Large ribosomal subunit protein bL36c (37 aa).

This sequence belongs to the bacterial ribosomal protein bL36 family.

The protein localises to the plastid. In Cuscuta reflexa (Southern Asian dodder), this protein is Large ribosomal subunit protein bL36c.